The following is a 1381-amino-acid chain: Major capsid protein (1381 aa).

Belongs to the herpesviridae major capsid protein family. As to quaternary structure, homomultimer. Makes the hexons and eleven out of twelve pentons. Interacts with triplex proteins 1/TRX1 and 2/TRX2; adjacent capsomers are linked together in groups of three by triplexes, heterotrimeric complexes composed of one molecule of TRX1 and two molecules of TRX2. Interacts with scaffold protein; this interaction allows efficient MCP transport to the host nucleus. Interacts with capsid vertex component 2/CVC2. Interacts with the small capsomere-interacting protein/SCP.

The protein localises to the virion. Its subcellular location is the host nucleus. Its function is as follows. Self-assembles to form an icosahedral capsid with a T=16 symmetry, about 200 nm in diameter, and consisting of 150 hexons and 12 pentons (total of 162 capsomers). Hexons form the edges and faces of the capsid and are each composed of six MCP molecules. In contrast, one penton is found at each of the 12 vertices. Eleven of the pentons are MCP pentamers, while the last vertex is occupied by the portal complex. The capsid is surrounded by a layer of proteinaceous material designated the tegument which, in turn, is enclosed in an envelope of host cell-derived lipids containing virus-encoded glycoproteins. The sequence is that of Major capsid protein from Epstein-Barr virus (strain B95-8) (HHV-4).